The following is a 186-amino-acid chain: Peptidyl-tRNA hydrolase (186 aa).

Tyr14 contacts tRNA. The Proton acceptor role is filled by His19. The tRNA site is built by Tyr64, Asn66, and Asn112.

This sequence belongs to the PTH family. In terms of assembly, monomer.

The protein resides in the cytoplasm. The catalysed reaction is an N-acyl-L-alpha-aminoacyl-tRNA + H2O = an N-acyl-L-amino acid + a tRNA + H(+). Functionally, hydrolyzes ribosome-free peptidyl-tRNAs (with 1 or more amino acids incorporated), which drop off the ribosome during protein synthesis, or as a result of ribosome stalling. In terms of biological role, catalyzes the release of premature peptidyl moieties from peptidyl-tRNA molecules trapped in stalled 50S ribosomal subunits, and thus maintains levels of free tRNAs and 50S ribosomes. This is Peptidyl-tRNA hydrolase from Lachnospira eligens (strain ATCC 27750 / DSM 3376 / VPI C15-48 / C15-B4) (Eubacterium eligens).